The sequence spans 508 residues: 2,3-bisphosphoglycerate-independent phosphoglycerate mutase (508 aa).

Mn(2+)-binding residues include Asp-9 and Ser-59. Residue Ser-59 is the Phosphoserine intermediate of the active site. Substrate-binding positions include His-120, Arg-149–Asp-150, Arg-181, Arg-187, Arg-254–Arg-257, and Lys-331. Mn(2+) is bound by residues Asp-398, His-402, Asp-439, His-440, and His-456.

The protein belongs to the BPG-independent phosphoglycerate mutase family. Mn(2+) is required as a cofactor.

It catalyses the reaction (2R)-2-phosphoglycerate = (2R)-3-phosphoglycerate. It participates in carbohydrate degradation; glycolysis; pyruvate from D-glyceraldehyde 3-phosphate: step 3/5. Its function is as follows. Catalyzes the interconversion of 2-phosphoglycerate and 3-phosphoglycerate. This is 2,3-bisphosphoglycerate-independent phosphoglycerate mutase from Halobacterium salinarum (strain ATCC 700922 / JCM 11081 / NRC-1) (Halobacterium halobium).